A 177-amino-acid polypeptide reads, in one-letter code: Novel acetylcholine receptor chaperone (177 aa).

Residues 1–5 lie on the Cytoplasmic side of the membrane; sequence MASPR. The chain crosses the membrane as a helical span at residues 6–26; it reads TVTVVALSVALGLFFVFMGTI. Residues 27-61 are Lumenal-facing; that stretch reads KLTPRLSKDAYSEMKRAYKSYVRALPLLKKMGINS. The interval 43–54 is interaction with NGFR; that stretch reads AYKSYVRALPLL. A helical membrane pass occupies residues 62–82; the sequence is ILLRKSIGALEVACGIVMTLV. The Cytoplasmic portion of the chain corresponds to 83-88; that stretch reads PGRPKD. The helical transmembrane segment at 89–109 threads the bilayer; it reads VANFFLLLLVLAVLFFHQLVG. At 110-114 the chain is on the lumenal side; sequence DPLKR. A helical transmembrane segment spans residues 115 to 132; sequence YAHALVFGILLTCRLLIA. The Cytoplasmic segment spans residues 133–177; that stretch reads RKPEDRSSEKKSSPPGNAGSDGNAGNTEEQPSLYEKAPQGKMKLS. The interval 136-177 is disordered; it reads EDRSSEKKSSPPGNAGSDGNAGNTEEQPSLYEKAPQGKMKLS.

This sequence belongs to the DoxX family. As to quaternary structure, may interact with NGFR. Interacts with RPN1, RPN2 and CANX.

It is found in the peroxisome membrane. It localises to the cytoplasmic vesicle. The protein localises to the endoplasmic reticulum membrane. Its function is as follows. Molecular chaperone which mediates the proper assembly and functional expression of the nicotinic acetylcholine receptors (nAChRs) throughout the brain. Essential for the proper folding, assembly, function and surface trafficking of alpha-7 (CHRNA7), alpha-4-beta-2, alpha-3-beta-2 and alpha-3-beta-4 receptors. Stably associates with ribophorin-1 (RPN1) and ribophorin-2 (RPN2) (components of the oligosaccharyl transferase (OST) complex) and with calnexin (CANX), both of which are critical for NACHO-mediated effects on CHRNA7 assembly and function. Facilitates the proper folding and assembly of alpha-6-beta-2 and alpha-6-beta-2-beta-3 receptors and acts at early stages of the nAChRs subunit assembly. Promotes the expression of the alpha-4(2):beta-2(3) stoichiometric form over the alpha-4(3):beta-2(2) form. This chain is Novel acetylcholine receptor chaperone (TMEM35A), found in Bos taurus (Bovine).